The primary structure comprises 302 residues: Homoserine O-acetyltransferase (302 aa).

C142 serves as the catalytic Acyl-thioester intermediate. Substrate-binding residues include K163 and S192. The active-site Proton acceptor is H235. Residue E237 is part of the active site. Substrate is bound at residue R249.

The protein belongs to the MetA family.

Its subcellular location is the cytoplasm. The enzyme catalyses L-homoserine + acetyl-CoA = O-acetyl-L-homoserine + CoA. Its pathway is amino-acid biosynthesis; L-methionine biosynthesis via de novo pathway; O-acetyl-L-homoserine from L-homoserine: step 1/1. Transfers an acetyl group from acetyl-CoA to L-homoserine, forming acetyl-L-homoserine. This is Homoserine O-acetyltransferase from Geobacillus kaustophilus (strain HTA426).